The following is a 1380-amino-acid chain: DNA-directed RNA polymerase subunit beta (1380 aa).

Belongs to the RNA polymerase beta chain family. In terms of assembly, the RNAP catalytic core consists of 2 alpha, 1 beta, 1 beta' and 1 omega subunit. When a sigma factor is associated with the core the holoenzyme is formed, which can initiate transcription.

It catalyses the reaction RNA(n) + a ribonucleoside 5'-triphosphate = RNA(n+1) + diphosphate. Functionally, DNA-dependent RNA polymerase catalyzes the transcription of DNA into RNA using the four ribonucleoside triphosphates as substrates. This Ehrlichia canis (strain Jake) protein is DNA-directed RNA polymerase subunit beta.